A 223-amino-acid polypeptide reads, in one-letter code: MELTLHEARVIGCLLEKEITTPEQYPLSLNSLTLACNQKTSREPVLELSETQVQIAVDSLNRKRLISEQSGFGSRVVKYKHRFCNTEFSELQLSAAALAIVCLLLLRGPQTPGELRTRSNRLHEFKDVIEVEDCIRQLMNREKPFLKQLPREAGRRESRYVELFSAASSQLETAQPESASHTVAHVAVSLDAEPLELTKRVTELEQQVAELTQKLDELIASLS.

It belongs to the UPF0502 family.

This chain is UPF0502 protein Shew185_1758, found in Shewanella baltica (strain OS185).